We begin with the raw amino-acid sequence, 227 residues long: Ion-translocating oxidoreductase complex subunit E (227 aa).

5 helical membrane passes run 34–56 (AINA…TIIS), 68–88 (IPIY…LLHA), 91–111 (FNLY…CIIV), 127–147 (FFDG…VGSI), and 181–201 (TIIL…LIAI).

It belongs to the NqrDE/RnfAE family. In terms of assembly, the complex is composed of six subunits: RnfA, RnfB, RnfC, RnfD, RnfE and RnfG.

The protein resides in the cell inner membrane. Part of a membrane-bound complex that couples electron transfer with translocation of ions across the membrane. The chain is Ion-translocating oxidoreductase complex subunit E from Buchnera aphidicola subsp. Acyrthosiphon pisum (strain APS) (Acyrthosiphon pisum symbiotic bacterium).